A 333-amino-acid polypeptide reads, in one-letter code: L-lactate dehydrogenase B chain (333 aa).

Residues 29–57 (GQVG…LEDK) and arginine 99 contribute to the NAD(+) site. Residues arginine 106, asparagine 138, and arginine 169 each contribute to the substrate site. Position 138 (asparagine 138) interacts with NAD(+). The active-site Proton acceptor is histidine 193. Threonine 248 provides a ligand contact to substrate.

The protein belongs to the LDH/MDH superfamily. LDH family. As to quaternary structure, homotetramer.

The protein localises to the cytoplasm. The enzyme catalyses (S)-lactate + NAD(+) = pyruvate + NADH + H(+). It participates in fermentation; pyruvate fermentation to lactate; (S)-lactate from pyruvate: step 1/1. Functionally, interconverts simultaneously and stereospecifically pyruvate and lactate with concomitant interconversion of NADH and NAD(+). The sequence is that of L-lactate dehydrogenase B chain (LDHB) from Caiman crocodilus apaporiensis (Rio Apaporis caiman).